Consider the following 947-residue polypeptide: Bromodomain testis-specific protein (947 aa).

A Bromo 1 domain is found at 27–133; it reads RLTNQLQYLQ…KLFMQKLSQM (107 aa). A JQ1-binding site is contributed by N109. S187 is subject to Phosphoserine. Residues 202–228 are disordered; that stretch reads QTAAQVTKGVKRKADTTTPATSAVKAS. The Nuclear localization signal signature appears at 209 to 220; that stretch reads KGVKRKADTTTP. The segment covering 217-228 has biased composition (polar residues); the sequence is TTTPATSAVKAS. Residues 267-376 enclose the Bromo 2 domain; sequence VKVTEQLRHC…DVFETHFSKI (110 aa). Disordered regions lie at residues 395–420, 444–511, 610–698, and 882–924; these read ETTGRENTNEASSEGNSSDDSEDERV, PFRK…KPMN, NNQL…IPPE, and NKCS…RRRE. Residues 417 to 470 are a coiled coil; that stretch reads DERVKRLAKLQEQLKAVHQQLQVLSQVPFRKLNKKKEKSKKEKKKEKVNNSNEN. Over residues 447-462 the composition is skewed to basic residues; it reads KLNKKKEKSKKEKKKE. A compositionally biased stretch (basic and acidic residues) spans 470–481; the sequence is NPRKMCEQMRLK. The segment covering 482-494 has biased composition (basic residues); that stretch reads EKSKRNQPKKRKQ. In terms of domain architecture, NET spans 500–582; the sequence is KSEDEDNAKP…ACLRKRPLKP (83 aa). Positions 591–621 form a coiled coil; it reads KEELHSQKKQELEKRLLDVNNQLNSRKRQTK. Residues 637-662 show a composition bias toward low complexity; it reads LSESSSSSSSSSESESSSSDLSSSDS. Composition is skewed to basic and acidic residues over residues 674 to 692 and 885 to 924; these read TEVKPNDSPSKENVKKMKN and SGEEQKEHQQSSEAQDKSKLWLLKDRDLARQKEQERRRRE.

The protein belongs to the BET family. In terms of assembly, interacts with mRNA splicing machinery proteins SRSF2, DDX5, HNRNPK and TARDBP. Interacts with the acetylated N-terminus of histone H1, H2, H3 and H4. Interacts with P-TEFb components CDK9 and CCNT1/cyclin-T1. Interacts with SMARCE1. Interacts with the acetylated N-terminus of histone H1.4, H2A, H2B, H3 and H4. Post-translationally, ubiquitinated in a SPOP-dependent manner, leading to proteasomal degradation. In terms of tissue distribution, testis-specific. A 3-fold higher expression is seen in adult testis than in embryo testis. Expression seems to be correlated with histone H4 hyperacetylation during the haploid phase of spermatogenesis (spermiogenesis). No expression, or very low expression is seen in patients' testes with abnormal spermatogenesis. Expressed in cancers such as non-small cell lung cancer and squamous cell carcinomas of the head and neck as well as of esophagus, but not in melanoma or in cancers of the colon, breast, kidney and bladder.

It localises to the nucleus. Its function is as follows. Testis-specific chromatin protein that specifically binds histone H4 acetylated at 'Lys-5' and 'Lys-8' (H4K5ac and H4K8ac, respectively) and plays a key role in spermatogenesis. Required in late pachytene spermatocytes: plays a role in meiotic and post-meiotic cells by binding to acetylated histones at the promoter of specific meiotic and post-meiotic genes, facilitating their activation at the appropriate time. In the post-meiotic phase of spermatogenesis, binds to hyperacetylated histones and participates in their general removal from DNA. Also recognizes and binds a subset of butyrylated histones: able to bind histone H4 butyrylated at 'Lys-8' (H4K8ac), while it is not able to bind H4 butyrylated at 'Lys-5' (H4K5ac). Also acts as a component of the splicing machinery in pachytene spermatocytes and round spermatids and participates in 3'-UTR truncation of specific mRNAs in post-meiotic spermatids. Required for chromocenter organization, a structure comprised of peri-centromeric heterochromatin. In Homo sapiens (Human), this protein is Bromodomain testis-specific protein (BRDT).